A 285-amino-acid polypeptide reads, in one-letter code: Diaminopimelate epimerase (285 aa).

The substrate site is built by N14 and N67. The active-site Proton donor is C76. Residues 77–78 (GN), N166, N199, and 217–218 (ER) contribute to the substrate site. C226 acts as the Proton acceptor in catalysis. Position 227–228 (227–228 (GT)) interacts with substrate.

This sequence belongs to the diaminopimelate epimerase family. As to quaternary structure, homodimer.

The protein resides in the cytoplasm. It carries out the reaction (2S,6S)-2,6-diaminopimelate = meso-2,6-diaminopimelate. The protein operates within amino-acid biosynthesis; L-lysine biosynthesis via DAP pathway; DL-2,6-diaminopimelate from LL-2,6-diaminopimelate: step 1/1. Functionally, catalyzes the stereoinversion of LL-2,6-diaminopimelate (L,L-DAP) to meso-diaminopimelate (meso-DAP), a precursor of L-lysine and an essential component of the bacterial peptidoglycan. The sequence is that of Diaminopimelate epimerase from Bacillus licheniformis (strain ATCC 14580 / DSM 13 / JCM 2505 / CCUG 7422 / NBRC 12200 / NCIMB 9375 / NCTC 10341 / NRRL NRS-1264 / Gibson 46).